We begin with the raw amino-acid sequence, 72 residues long: MSKVCVLTGKRPKYGNTVSHANNHVRTRFEPNLHTKKIWIEEEKRFVKVKLSAKAMKIIAKTGTAQLAKLLK.

It belongs to the bacterial ribosomal protein bL28 family.

The protein is Large ribosomal subunit protein bL28 of Chlorobium phaeobacteroides (strain DSM 266 / SMG 266 / 2430).